The sequence spans 165 residues: Adenine phosphoribosyltransferase (165 aa).

This sequence belongs to the purine/pyrimidine phosphoribosyltransferase family. As to quaternary structure, homodimer.

It localises to the cytoplasm. It catalyses the reaction AMP + diphosphate = 5-phospho-alpha-D-ribose 1-diphosphate + adenine. It participates in purine metabolism; AMP biosynthesis via salvage pathway; AMP from adenine: step 1/1. In terms of biological role, catalyzes a salvage reaction resulting in the formation of AMP, that is energically less costly than de novo synthesis. The sequence is that of Adenine phosphoribosyltransferase from Bdellovibrio bacteriovorus (strain ATCC 15356 / DSM 50701 / NCIMB 9529 / HD100).